Consider the following 558-residue polypeptide: Thermosome subunit alpha (558 aa).

The interval 536–558 (TEKGKKEGGEGAGAETPGAPSLE) is disordered. Low complexity predominate over residues 548-558 (GAETPGAPSLE).

The protein belongs to the TCP-1 chaperonin family. As to quaternary structure, forms a Heterooligomeric complex of two stacked eight-membered rings.

Functionally, molecular chaperone; binds unfolded polypeptides in vitro, and has a weak ATPase activity. The protein is Thermosome subunit alpha (thsA) of Sulfolobus acidocaldarius (strain ATCC 33909 / DSM 639 / JCM 8929 / NBRC 15157 / NCIMB 11770).